Reading from the N-terminus, the 203-residue chain is 3-isopropylmalate dehydratase small subunit (203 aa).

This sequence belongs to the LeuD family. LeuD type 1 subfamily. In terms of assembly, heterodimer of LeuC and LeuD.

The enzyme catalyses (2R,3S)-3-isopropylmalate = (2S)-2-isopropylmalate. It functions in the pathway amino-acid biosynthesis; L-leucine biosynthesis; L-leucine from 3-methyl-2-oxobutanoate: step 2/4. In terms of biological role, catalyzes the isomerization between 2-isopropylmalate and 3-isopropylmalate, via the formation of 2-isopropylmaleate. This is 3-isopropylmalate dehydratase small subunit from Phenylobacterium zucineum (strain HLK1).